The primary structure comprises 354 residues: tRNA N6-adenosine threonylcarbamoyltransferase (354 aa).

2 residues coordinate Fe cation: histidine 111 and histidine 115. Substrate-binding positions include 134-138, aspartate 167, glycine 180, and asparagine 279; that span reads LVSGG. Residue aspartate 319 coordinates Fe cation.

This sequence belongs to the KAE1 / TsaD family. The cofactor is Fe(2+).

Its subcellular location is the cytoplasm. The enzyme catalyses L-threonylcarbamoyladenylate + adenosine(37) in tRNA = N(6)-L-threonylcarbamoyladenosine(37) in tRNA + AMP + H(+). Required for the formation of a threonylcarbamoyl group on adenosine at position 37 (t(6)A37) in tRNAs that read codons beginning with adenine. Is involved in the transfer of the threonylcarbamoyl moiety of threonylcarbamoyl-AMP (TC-AMP) to the N6 group of A37, together with TsaE and TsaB. TsaD likely plays a direct catalytic role in this reaction. This Neisseria meningitidis serogroup B (strain ATCC BAA-335 / MC58) protein is tRNA N6-adenosine threonylcarbamoyltransferase.